We begin with the raw amino-acid sequence, 319 residues long: Glutathione synthetase (319 aa).

The 187-residue stretch at 125–311 (KLFTAWFPEL…ITGMLMDAIE (187 aa)) folds into the ATP-grasp domain. 151 to 207 (HQEHGDIILKPLDGMGGTSIFRVKQDDPNLSVIIETLTELSSRFCMAQNFLPAIKEG) serves as a coordination point for ATP. Positions 281 and 283 each coordinate Mg(2+).

It belongs to the prokaryotic GSH synthase family. Mg(2+) is required as a cofactor. Mn(2+) serves as cofactor.

It catalyses the reaction gamma-L-glutamyl-L-cysteine + glycine + ATP = glutathione + ADP + phosphate + H(+). It participates in sulfur metabolism; glutathione biosynthesis; glutathione from L-cysteine and L-glutamate: step 2/2. The sequence is that of Glutathione synthetase from Yersinia pestis.